Here is a 185-residue protein sequence, read N- to C-terminus: Ribosome-recycling factor (185 aa).

The protein belongs to the RRF family.

It is found in the cytoplasm. Responsible for the release of ribosomes from messenger RNA at the termination of protein biosynthesis. May increase the efficiency of translation by recycling ribosomes from one round of translation to another. The protein is Ribosome-recycling factor of Yersinia pseudotuberculosis serotype O:1b (strain IP 31758).